Reading from the N-terminus, the 89-residue chain is Large ribosomal subunit protein bL27 (89 aa).

Positions 1–22 (MAQKKAGGSSRNGRDSAGRRLG) are disordered.

The protein belongs to the bacterial ribosomal protein bL27 family.

This is Large ribosomal subunit protein bL27 from Gluconacetobacter diazotrophicus (strain ATCC 49037 / DSM 5601 / CCUG 37298 / CIP 103539 / LMG 7603 / PAl5).